A 437-amino-acid polypeptide reads, in one-letter code: Ribosomal protein uS12 methylthiotransferase RimO (437 aa).

One can recognise an MTTase N-terminal domain in the interval 9-125 (PAIFLLSLGC…VLAAIGAHYC (117 aa)). [4Fe-4S] cluster is bound by residues Cys-18, Cys-54, Cys-88, Cys-149, Cys-153, and Cys-156. The Radical SAM core domain maps to 135 to 364 (LTPPHYAFLK…MELQESIAAS (230 aa)). Residues 367-434 (RKLEGQTLTV…AYELFGRVGS (68 aa)) enclose the TRAM domain.

Belongs to the methylthiotransferase family. RimO subfamily. [4Fe-4S] cluster is required as a cofactor.

It is found in the cytoplasm. The enzyme catalyses L-aspartate(89)-[ribosomal protein uS12]-hydrogen + (sulfur carrier)-SH + AH2 + 2 S-adenosyl-L-methionine = 3-methylsulfanyl-L-aspartate(89)-[ribosomal protein uS12]-hydrogen + (sulfur carrier)-H + 5'-deoxyadenosine + L-methionine + A + S-adenosyl-L-homocysteine + 2 H(+). Functionally, catalyzes the methylthiolation of an aspartic acid residue of ribosomal protein uS12. The protein is Ribosomal protein uS12 methylthiotransferase RimO of Chlorobaculum parvum (strain DSM 263 / NCIMB 8327) (Chlorobium vibrioforme subsp. thiosulfatophilum).